Here is a 401-residue protein sequence, read N- to C-terminus: Dual-specificity RNA methyltransferase RlmN (401 aa).

E114 acts as the Proton acceptor in catalysis. Residues 120 to 365 (DKGRGTLCVS…TMVRRTRGDD (246 aa)) form the Radical SAM core domain. A disulfide bridge connects residues C127 and C370. Residues C134, C138, and C141 each coordinate [4Fe-4S] cluster. S-adenosyl-L-methionine-binding positions include 187–188 (GE), S219, 241–243 (SLH), and N327. Catalysis depends on C370, which acts as the S-methylcysteine intermediate.

The protein belongs to the radical SAM superfamily. RlmN family. It depends on [4Fe-4S] cluster as a cofactor.

Its subcellular location is the cytoplasm. It carries out the reaction adenosine(2503) in 23S rRNA + 2 reduced [2Fe-2S]-[ferredoxin] + 2 S-adenosyl-L-methionine = 2-methyladenosine(2503) in 23S rRNA + 5'-deoxyadenosine + L-methionine + 2 oxidized [2Fe-2S]-[ferredoxin] + S-adenosyl-L-homocysteine. It catalyses the reaction adenosine(37) in tRNA + 2 reduced [2Fe-2S]-[ferredoxin] + 2 S-adenosyl-L-methionine = 2-methyladenosine(37) in tRNA + 5'-deoxyadenosine + L-methionine + 2 oxidized [2Fe-2S]-[ferredoxin] + S-adenosyl-L-homocysteine. Its function is as follows. Specifically methylates position 2 of adenine 2503 in 23S rRNA and position 2 of adenine 37 in tRNAs. m2A2503 modification seems to play a crucial role in the proofreading step occurring at the peptidyl transferase center and thus would serve to optimize ribosomal fidelity. The chain is Dual-specificity RNA methyltransferase RlmN from Xanthomonas campestris pv. campestris (strain B100).